We begin with the raw amino-acid sequence, 164 residues long: NADH-quinone oxidoreductase subunit I 2 (164 aa).

2 consecutive 4Fe-4S ferredoxin-type domains span residues 39 to 71 (IVLT…VVKA) and 81 to 110 (ESFR…LTPD). Cysteine 51, cysteine 54, cysteine 57, cysteine 61, cysteine 90, cysteine 93, cysteine 96, and cysteine 100 together coordinate [4Fe-4S] cluster.

The protein belongs to the complex I 23 kDa subunit family. NDH-1 is composed of 14 different subunits. Subunits NuoA, H, J, K, L, M, N constitute the membrane sector of the complex. [4Fe-4S] cluster serves as cofactor.

The protein resides in the cell inner membrane. It carries out the reaction a quinone + NADH + 5 H(+)(in) = a quinol + NAD(+) + 4 H(+)(out). In terms of biological role, NDH-1 shuttles electrons from NADH, via FMN and iron-sulfur (Fe-S) centers, to quinones in the respiratory chain. The immediate electron acceptor for the enzyme in this species is believed to be ubiquinone. Couples the redox reaction to proton translocation (for every two electrons transferred, four hydrogen ions are translocated across the cytoplasmic membrane), and thus conserves the redox energy in a proton gradient. The sequence is that of NADH-quinone oxidoreductase subunit I 2 from Cereibacter sphaeroides (strain ATCC 17023 / DSM 158 / JCM 6121 / CCUG 31486 / LMG 2827 / NBRC 12203 / NCIMB 8253 / ATH 2.4.1.) (Rhodobacter sphaeroides).